Consider the following 642-residue polypeptide: 1-deoxy-D-xylulose-5-phosphate synthase (642 aa).

Thiamine diphosphate-binding positions include His79 and 120 to 122 (AHS). Asp155 is a binding site for Mg(2+). Thiamine diphosphate-binding positions include 156–157 (GS), Asn184, Tyr293, and Glu375. Position 184 (Asn184) interacts with Mg(2+).

Belongs to the transketolase family. DXPS subfamily. In terms of assembly, homodimer. Mg(2+) serves as cofactor. It depends on thiamine diphosphate as a cofactor.

It carries out the reaction D-glyceraldehyde 3-phosphate + pyruvate + H(+) = 1-deoxy-D-xylulose 5-phosphate + CO2. It functions in the pathway metabolic intermediate biosynthesis; 1-deoxy-D-xylulose 5-phosphate biosynthesis; 1-deoxy-D-xylulose 5-phosphate from D-glyceraldehyde 3-phosphate and pyruvate: step 1/1. Catalyzes the acyloin condensation reaction between C atoms 2 and 3 of pyruvate and glyceraldehyde 3-phosphate to yield 1-deoxy-D-xylulose-5-phosphate (DXP). The sequence is that of 1-deoxy-D-xylulose-5-phosphate synthase from Ruegeria pomeroyi (strain ATCC 700808 / DSM 15171 / DSS-3) (Silicibacter pomeroyi).